Reading from the N-terminus, the 143-residue chain is Large-conductance mechanosensitive channel (143 aa).

2 helical membrane passes run 10–30 and 89–109; these read FAVKGNVMDLAVGVIIGGAFS and GSFITVLINFIILAFIIFLMV.

The protein belongs to the MscL family. Homopentamer.

It is found in the cell inner membrane. Functionally, channel that opens in response to stretch forces in the membrane lipid bilayer. May participate in the regulation of osmotic pressure changes within the cell. This is Large-conductance mechanosensitive channel from Burkholderia multivorans (strain ATCC 17616 / 249).